The chain runs to 155 residues: Large ribosomal subunit protein uL22 (155 aa).

The protein belongs to the universal ribosomal protein uL22 family. Part of the 50S ribosomal subunit.

Its function is as follows. This protein binds specifically to 23S rRNA. It makes multiple contacts with different domains of the 23S rRNA in the assembled 50S subunit and ribosome. The globular domain of the protein is located near the polypeptide exit tunnel on the outside of the subunit, while an extended beta-hairpin is found that lines the wall of the exit tunnel in the center of the 70S ribosome. This Archaeoglobus fulgidus (strain ATCC 49558 / DSM 4304 / JCM 9628 / NBRC 100126 / VC-16) protein is Large ribosomal subunit protein uL22.